The chain runs to 150 residues: Globin-3 (150 aa).

A Globin domain is found at 11–150; the sequence is PLSAAEKTKI…MICILLRSAY (140 aa). Residues His74 and His106 each contribute to the heme b site.

The protein belongs to the globin family. Monomer.

The polypeptide is Globin-3 (Petromyzon marinus (Sea lamprey)).